A 184-amino-acid chain; its full sequence is Adenine phosphoribosyltransferase (184 aa).

This sequence belongs to the purine/pyrimidine phosphoribosyltransferase family. Homodimer.

It localises to the cytoplasm. It catalyses the reaction AMP + diphosphate = 5-phospho-alpha-D-ribose 1-diphosphate + adenine. The protein operates within purine metabolism; AMP biosynthesis via salvage pathway; AMP from adenine: step 1/1. Catalyzes a salvage reaction resulting in the formation of AMP, that is energically less costly than de novo synthesis. This is Adenine phosphoribosyltransferase from Mycobacterium marinum (strain ATCC BAA-535 / M).